The sequence spans 82 residues: Exodeoxyribonuclease 7 small subunit (82 aa).

It belongs to the XseB family. Heterooligomer composed of large and small subunits.

The protein resides in the cytoplasm. It catalyses the reaction Exonucleolytic cleavage in either 5'- to 3'- or 3'- to 5'-direction to yield nucleoside 5'-phosphates.. Its function is as follows. Bidirectionally degrades single-stranded DNA into large acid-insoluble oligonucleotides, which are then degraded further into small acid-soluble oligonucleotides. This chain is Exodeoxyribonuclease 7 small subunit, found in Coxiella burnetii (strain CbuG_Q212) (Coxiella burnetii (strain Q212)).